The primary structure comprises 153 residues: Putative WASP homolog-associated protein with actin, membranes and microtubules-like protein 1 (153 aa).

Residues 113 to 151 are a coiled coil; the sequence is AIQFYEIQLELYEVKFEILKNKEILLTTQLDSLERLIKD.

In Homo sapiens (Human), this protein is Putative WASP homolog-associated protein with actin, membranes and microtubules-like protein 1 (WHAMMP3).